A 556-amino-acid polypeptide reads, in one-letter code: Formate--tetrahydrofolate ligase (556 aa).

65 to 72 (TPAGEGKS) contacts ATP.

Belongs to the formate--tetrahydrofolate ligase family.

The enzyme catalyses (6S)-5,6,7,8-tetrahydrofolate + formate + ATP = (6R)-10-formyltetrahydrofolate + ADP + phosphate. It participates in one-carbon metabolism; tetrahydrofolate interconversion. In Clostridium botulinum (strain Alaska E43 / Type E3), this protein is Formate--tetrahydrofolate ligase.